Consider the following 189-residue polypeptide: Calcyphosin (189 aa).

EF-hand domains are found at residues 21 to 56 (LGIQ…LGLV), 57 to 92 (LDTA…PMSQ), 93 to 128 (AREA…RTHP), and 136 to 172 (TEEE…VSAS). 14 residues coordinate Ca(2+): Asp-34, Asp-36, Ser-38, Ser-40, Glu-45, Asp-70, Asp-72, Ser-74, Thr-76, Glu-81, Asp-106, Ser-108, Asp-110, and Asp-117. Phosphoserine; by PKA is present on Ser-40.

As to quaternary structure, monomer. Does not form oligomers in the presence of calcium. Phosphorylated in response to thyrotropin and cAMP. In terms of tissue distribution, detected in thyroid, salivary gland, lung, brain and cerebellum (at protein level).

It is found in the cytoplasm. Functionally, calcium-binding protein. May play a role in cellular signaling events (Potential). This is Calcyphosin (CAPS) from Canis lupus familiaris (Dog).